A 382-amino-acid chain; its full sequence is Mannitol-1-phosphate 5-dehydrogenase (382 aa).

Position 3 to 14 (3 to 14 (ALHFGAGNIGRG)) interacts with NAD(+). An N6-acetyllysine modification is found at Lys269.

The protein belongs to the mannitol dehydrogenase family.

The catalysed reaction is D-mannitol 1-phosphate + NAD(+) = beta-D-fructose 6-phosphate + NADH + H(+). The sequence is that of Mannitol-1-phosphate 5-dehydrogenase from Escherichia coli (strain K12 / MC4100 / BW2952).